Consider the following 2371-residue polypeptide: NBAS subunit of NRZ tethering complex (2371 aa).

The interaction with USE1 stretch occupies residues 1 to 1035; sequence MAAPESGPAL…KTEATTKLHD (1035 aa). 2 WD repeats span residues 130-169 and 316-355; these read DPKPQWRRVAWSYDCTLLAYAESTGTVRVFDLMGSELFVI and QEQDGIFKMSLSPDGMLLAAIHFSGKLSIWAIPSLKQQGE. Residues S473 and S475 each carry the phosphoserine modification. The tract at residues 1036 to 2371 is interaction with ZW10 and RINT1; that stretch reads MVDQLEQILS…TALRAAQHWV (1336 aa). Position 1057 is an N6-acetyllysine (K1057).

Component of the NRZ complex composed of NBAS, ZW10 and RINT1/TIP20L; NRZ associates with SNAREs STX18, USE1, BNIP1/SEC20L and SEC22B (the assembly has been described as syntaxin 18 complex); links NRZ to SNARE USE1. In terms of tissue distribution, broadly expressed, with highest levels in heart and skeletal muscle, and lowest levels in liver, small intestine and thymus. Well expressed in retinal ganglion cells, epidermal skin cells, and leukocytes. Up-regulated together with N-myc in some neuroblastoma cell lines.

The protein localises to the cytoplasm. It localises to the endoplasmic reticulum. The protein resides in the endoplasmic reticulum membrane. Its function is as follows. Involved in Golgi-to-endoplasmic reticulum (ER) retrograde transport; the function is proposed to depend on its association in the NRZ complex which is believed to play a role in SNARE assembly at the ER. Required for normal embryonic development. May play a role in the nonsense-mediated decay pathway of mRNAs containing premature stop codons. The sequence is that of NBAS subunit of NRZ tethering complex from Homo sapiens (Human).